The chain runs to 210 residues: Thymidylate kinase (210 aa).

An ATP-binding site is contributed by 16-23; that stretch reads GGDGVGKS.

The protein belongs to the thymidylate kinase family.

It carries out the reaction dTMP + ATP = dTDP + ADP. Its function is as follows. Phosphorylation of dTMP to form dTDP in both de novo and salvage pathways of dTTP synthesis. This Leifsonia xyli subsp. xyli (strain CTCB07) protein is Thymidylate kinase.